Consider the following 145-residue polypeptide: D-aminoacyl-tRNA deacylase (145 aa).

The short motif at 137 to 138 (GP) is the Gly-cisPro motif, important for rejection of L-amino acids element.

It belongs to the DTD family. Homodimer.

It is found in the cytoplasm. It catalyses the reaction glycyl-tRNA(Ala) + H2O = tRNA(Ala) + glycine + H(+). The catalysed reaction is a D-aminoacyl-tRNA + H2O = a tRNA + a D-alpha-amino acid + H(+). In terms of biological role, an aminoacyl-tRNA editing enzyme that deacylates mischarged D-aminoacyl-tRNAs. Also deacylates mischarged glycyl-tRNA(Ala), protecting cells against glycine mischarging by AlaRS. Acts via tRNA-based rather than protein-based catalysis; rejects L-amino acids rather than detecting D-amino acids in the active site. By recycling D-aminoacyl-tRNA to D-amino acids and free tRNA molecules, this enzyme counteracts the toxicity associated with the formation of D-aminoacyl-tRNA entities in vivo and helps enforce protein L-homochirality. The chain is D-aminoacyl-tRNA deacylase from Brevibacillus brevis (strain 47 / JCM 6285 / NBRC 100599).